Reading from the N-terminus, the 474-residue chain is MNFSQIAQQVIDKLGGKDNISAAAHCATRLRIVVKNENLIDKKGIENIEGVKGQFAVAGQYQIIFGSGTVNKVYAALSKLLGIGDMTTSEVAAAGTEKQGLLQRLVKGLADIFVPIIPAIVAGGLLMGIHSMLTAKGFFVEEKNVVDLYPAIADLVDFINTIANAPFVFLPVLLGFSATRKFGGNPFLGAALGMLLVHPALSDGWNYALTLAKGNIQYWHIFGLEIERVGYQGTVIPVLVASWVLATLEKNLRKVVPSFLDNLITPLFALFITGLLAFTVIGPIGREAGSLISTGLTWLYDTLGFVGGAIFGTLYAPIVITGMHQTFIAVETQLLAEVARTGGTFIFPIAAMSNIAQGAACLGAAYVMKDAKVRGIAVPSGISALLGITEPAMFGVNLRYRYPFISAMIGAGISSAVIALFNVKAIALGAAGLPGIPSIKPDSLAMYCVGMLISASIAFTLTVILGKRAQLKAE.

The 84-residue stretch at serine 4 to threonine 87 folds into the PTS EIIB type-1 domain. Cysteine 26 serves as the catalytic Phosphocysteine intermediate; for EIIB activity. The PTS EIIC type-1 domain occupies lysine 107–glutamate 474. 10 helical membrane-spanning segments follow: residues leucine 109–isoleucine 129, phenylalanine 158–alanine 178, phenylalanine 182–serine 202, valine 229–glutamate 249, isoleucine 264–isoleucine 284, leucine 303–methionine 323, phenylalanine 345–alanine 365, isoleucine 376–valine 396, proline 403–valine 423, and leucine 444–isoleucine 464.

The protein resides in the cell inner membrane. It carries out the reaction N(pros)-phospho-L-histidyl-[protein](out) + sucrose = sucrose 6(G)-phosphate(in) + L-histidyl-[protein]. Functionally, the phosphoenolpyruvate-dependent sugar phosphotransferase system (sugar PTS), a major carbohydrate active transport system, catalyzes the phosphorylation of incoming sugar substrates concomitantly with their translocation across the cell membrane. This system is involved in sucrose transport. The protein is PTS system sucrose-specific EIIBC component (scrA) of Pasteurella multocida (strain Pm70).